The chain runs to 111 residues: Large ribosomal subunit protein uL22 (111 aa).

This sequence belongs to the universal ribosomal protein uL22 family. Part of the 50S ribosomal subunit.

Functionally, this protein binds specifically to 23S rRNA; its binding is stimulated by other ribosomal proteins, e.g. L4, L17, and L20. It is important during the early stages of 50S assembly. It makes multiple contacts with different domains of the 23S rRNA in the assembled 50S subunit and ribosome. Its function is as follows. The globular domain of the protein is located near the polypeptide exit tunnel on the outside of the subunit, while an extended beta-hairpin is found that lines the wall of the exit tunnel in the center of the 70S ribosome. This chain is Large ribosomal subunit protein uL22, found in Chlamydia caviae (strain ATCC VR-813 / DSM 19441 / 03DC25 / GPIC) (Chlamydophila caviae).